The primary structure comprises 530 residues: Glucose-6-phosphate isomerase (530 aa).

Residue Glu-356 is the Proton donor of the active site. Active-site residues include His-387 and Lys-502.

This sequence belongs to the GPI family.

It localises to the cytoplasm. It carries out the reaction alpha-D-glucose 6-phosphate = beta-D-fructose 6-phosphate. It participates in carbohydrate biosynthesis; gluconeogenesis. Its pathway is carbohydrate degradation; glycolysis; D-glyceraldehyde 3-phosphate and glycerone phosphate from D-glucose: step 2/4. In terms of biological role, catalyzes the reversible isomerization of glucose-6-phosphate to fructose-6-phosphate. This Borreliella burgdorferi (strain ATCC 35210 / DSM 4680 / CIP 102532 / B31) (Borrelia burgdorferi) protein is Glucose-6-phosphate isomerase.